The primary structure comprises 853 residues: DNA mismatch repair protein MutS (853 aa).

Gly-614–Ser-621 is an ATP binding site.

This sequence belongs to the DNA mismatch repair MutS family.

In terms of biological role, this protein is involved in the repair of mismatches in DNA. It is possible that it carries out the mismatch recognition step. This protein has a weak ATPase activity. The sequence is that of DNA mismatch repair protein MutS from Escherichia coli O6:K15:H31 (strain 536 / UPEC).